Consider the following 430-residue polypeptide: BSD domain-containing protein 1 (430 aa).

Ser92 and Ser166 each carry phosphoserine. The BSD domain occupies 146–198; that stretch reads WLSQFCLEEKKGEISELLVGSPSIRALYTKMVPAAVSHSEFWHRYFYKVHQLE. Disordered stretches follow at residues 247-298 and 319-398; these read STFP…APEA and LAVD…WEKD. The span at 276-291 shows a compositional bias: polar residues; the sequence is PSESSESISLVTQIAN. Positions 350–367 are enriched in basic and acidic residues; the sequence is PPARVETLREEAPTDLRV. Phosphothreonine is present on Thr356. Polar residues predominate over residues 371–390; that stretch reads NSDSGKSTPSNNGKKGSSTD. Phosphoserine occurs at positions 387, 388, and 418.

In Homo sapiens (Human), this protein is BSD domain-containing protein 1 (BSDC1).